The following is a 776-amino-acid chain: Ion-translocating oxidoreductase complex subunit C (776 aa).

4Fe-4S ferredoxin-type domains follow at residues 368 to 397 (MGAPQEEQHCIRCSACADACPADLLPQQLY) and 407 to 436 (KATAHNLADCIECGACAYVCPSNIPLVQYF). Residues C377, C380, C383, C387, C416, C419, C422, and C426 each coordinate [4Fe-4S] cluster. Basic and acidic residues-rich tracts occupy residues 534-543 (ARARQAEKVQ), 597-611 (ADEKPAEPIDPRKAA), 633-647 (ADEKPAEPIDPRKAA), 669-683 (ADEKPAEPIDPRKAA), and 705-719 (ADEKPAEPIDPRKAT). The disordered stretch occupies residues 534–754 (ARARQAEKVQ…ENEAEDPRKA (221 aa)). The segment covering 721-743 (EAAIARAKARKAAQAGERAQAAN) has biased composition (low complexity).

This sequence belongs to the 4Fe4S bacterial-type ferredoxin family. RnfC subfamily. As to quaternary structure, the complex is composed of six subunits: RnfA, RnfB, RnfC, RnfD, RnfE and RnfG. [4Fe-4S] cluster serves as cofactor.

The protein resides in the cell inner membrane. Its function is as follows. Part of a membrane-bound complex that couples electron transfer with translocation of ions across the membrane. The sequence is that of Ion-translocating oxidoreductase complex subunit C from Cronobacter sakazakii (strain ATCC BAA-894) (Enterobacter sakazakii).